We begin with the raw amino-acid sequence, 119 residues long: Large ribosomal subunit protein bL17 (119 aa).

The protein belongs to the bacterial ribosomal protein bL17 family. Part of the 50S ribosomal subunit. Contacts protein L32.

This Malacoplasma penetrans (strain HF-2) (Mycoplasma penetrans) protein is Large ribosomal subunit protein bL17.